Reading from the N-terminus, the 2194-residue chain is Glutamate synthase [NADH], amyloplastic (2194 aa).

The N-terminal 101 residues, 1 to 101 (MSNSLSLTFT…LYDPAFDKDS (101 aa)), are a transit peptide targeting the amyloplast. Residue cysteine 102 is the Nucleophile of the active site. The region spanning 102-503 (CGVGFVAELN…PGMMLLVDFE (402 aa)) is the Glutamine amidotransferase type-2 domain. The disordered stretch occupies residues 1021–1045 (GGKSNTGEGGEQPSRMEPLADGSRN). 1193–1250 (LAETHQTLVANDLRGRTTLQTDGQLKTGRDVAIAALLGAEEYGFSTAPLITLGCIMMR) is a binding site for FMN. The [3Fe-4S] cluster site is built by cysteine 1246, cysteine 1252, and cysteine 1257. 1974 to 1988 (GGGDTGTDCIGTSIR) contributes to the NAD(+) binding site.

This sequence belongs to the glutamate synthase family. In terms of assembly, monomer. Requires [3Fe-4S] cluster as cofactor. FAD serves as cofactor. It depends on FMN as a cofactor. As to expression, expressed in infected cells in root nodules. Barely detected in roots and stems.

Its subcellular location is the plastid. It localises to the amyloplast. It carries out the reaction 2 L-glutamate + NAD(+) = L-glutamine + 2-oxoglutarate + NADH + H(+). The protein operates within amino-acid biosynthesis; L-glutamate biosynthesis via GLT pathway; L-glutamate from 2-oxoglutarate and L-glutamine (NAD(+) route): step 1/1. It participates in energy metabolism; nitrogen metabolism. Inhibited by malate, citrate, glutamate, NAD(+) and azaserine, but not by 2-2' dipyridil and N-ethylmaleimide. Required for the assimilation of symbiotically fixed nitrogen into amino acids in root nodules. This chain is Glutamate synthase [NADH], amyloplastic, found in Medicago sativa (Alfalfa).